The sequence spans 166 residues: EndA-like protein (166 aa).

Belongs to the tRNA-intron endonuclease family. Archaeal short subfamily.

The sequence is that of EndA-like protein from Methanopyrus kandleri (strain AV19 / DSM 6324 / JCM 9639 / NBRC 100938).